The sequence spans 375 residues: UDP-4-amino-4,6-dideoxy-N-acetyl-beta-L-altrosamine transaminase (375 aa).

Residues Tyr6, 26–29, Ala56, and Ser178 contribute to the substrate site; that span reads KQLT. Lys183 carries the N6-(pyridoxal phosphate)lysine modification. Substrate contacts are provided by residues Asn228 and 313-316; that span reads QVHY.

Belongs to the DegT/DnrJ/EryC1 family.

The enzyme catalyses UDP-4-amino-4,6-dideoxy-N-acetyl-beta-L-altrosamine + 2-oxoglutarate = UDP-2-acetamido-2,6-dideoxy-beta-L-arabino-hex-4-ulose + L-glutamate. Its function is as follows. Catalyzes the second step in the biosynthesis of pseudaminic acid, a sialic-acid-like sugar that is used to modify flagellin. Uses UDP-2-acetamido-2,6-dideoxy-beta-L-arabino-4-hexulose as substrate producing UDP-4-amino-4,6-dideoxy-beta-L-AltNAc. The sequence is that of UDP-4-amino-4,6-dideoxy-N-acetyl-beta-L-altrosamine transaminase (pseC) from Helicobacter pylori (strain ATCC 700392 / 26695) (Campylobacter pylori).